Here is a 251-residue protein sequence, read N- to C-terminus: tRNA-cytidine(32) 2-sulfurtransferase 2 (251 aa).

A PP-loop motif motif is present at residues 33–38; that stretch reads SGGKDS. Residues C108, C111, and C199 each contribute to the [4Fe-4S] cluster site.

This sequence belongs to the TtcA family. In terms of assembly, homodimer. Mg(2+) serves as cofactor. [4Fe-4S] cluster is required as a cofactor.

The protein resides in the cytoplasm. The catalysed reaction is cytidine(32) in tRNA + S-sulfanyl-L-cysteinyl-[cysteine desulfurase] + AH2 + ATP = 2-thiocytidine(32) in tRNA + L-cysteinyl-[cysteine desulfurase] + A + AMP + diphosphate + H(+). It participates in tRNA modification. Its function is as follows. Catalyzes the ATP-dependent 2-thiolation of cytidine in position 32 of tRNA, to form 2-thiocytidine (s(2)C32). The sulfur atoms are provided by the cysteine/cysteine desulfurase (IscS) system. This is tRNA-cytidine(32) 2-sulfurtransferase 2 from Francisella tularensis subsp. tularensis (strain WY96-3418).